A 531-amino-acid polypeptide reads, in one-letter code: L-aspartate oxidase (531 aa).

Residues 11-14, Lys-33, 40-47, 151-152, and Asp-205 contribute to the FAD site; these read SGAA, NSVYAQGG, and TA. Catalysis depends on Arg-272, which acts as the Proton donor/acceptor. FAD contacts are provided by residues Glu-353 and 369-370; that span reads SL.

Belongs to the FAD-dependent oxidoreductase 2 family. NadB subfamily. Monomer. Homodimer. FAD serves as cofactor.

The protein localises to the cytoplasm. It catalyses the reaction L-aspartate + O2 = iminosuccinate + H2O2. It carries out the reaction fumarate + L-aspartate = iminosuccinate + succinate. Its pathway is cofactor biosynthesis; NAD(+) biosynthesis; iminoaspartate from L-aspartate (oxidase route): step 1/1. Its function is as follows. Catalyzes the oxidation of L-aspartate to iminoaspartate, the first step in the de novo biosynthesis of NAD(+). Can use either oxygen or fumarate as electron acceptors, which allows the enzyme to be functional under aerobic and anaerobic conditions. This is L-aspartate oxidase from Bacillus subtilis (strain 168).